Reading from the N-terminus, the 119-residue chain is Large ribosomal subunit protein bL20 (119 aa).

This sequence belongs to the bacterial ribosomal protein bL20 family.

Its function is as follows. Binds directly to 23S ribosomal RNA and is necessary for the in vitro assembly process of the 50S ribosomal subunit. It is not involved in the protein synthesizing functions of that subunit. The chain is Large ribosomal subunit protein bL20 from Caldanaerobacter subterraneus subsp. tengcongensis (strain DSM 15242 / JCM 11007 / NBRC 100824 / MB4) (Thermoanaerobacter tengcongensis).